The sequence spans 388 residues: Probable peptidoglycan glycosyltransferase FtsW (388 aa).

The Cytoplasmic portion of the chain corresponds to 1 to 19 (MSAAAPKPRPAHRFHIDQT). The helical transmembrane segment at 20–40 (LLSVCLCLLGIGFVMVASSSM) threads the bilayer. Residues 41-57 (HLGVKMADDVSYYPFKQ) are Periplasmic-facing. Residues 58–78 (LVHIILGLMFAAAILAIPMKY) form a helical membrane-spanning segment. The Cytoplasmic portion of the chain corresponds to 79–85 (WQKIGQP). Residues 86-106 (LFIVGLVLLLVVLIPGVGVKV) traverse the membrane as a helical segment. Residues 107-117 (NGSTRWLSLLG) lie on the Periplasmic side of the membrane. A helical membrane pass occupies residues 118–137 (LRIQVSEVMKFISVVYMAGY). At 138–147 (ITRHSDHVRH) the chain is on the cytoplasmic side. A helical membrane pass occupies residues 148-168 (SIFGLLRPLMLLSVASILLLL). Topologically, residues 169 to 170 (EP) are periplasmic. The chain crosses the membrane as a helical span at residues 171–191 (DFGSAVVILIIAMGMMFLGGA). A topological domain (cytoplasmic) is located at residue R192. A helical transmembrane segment spans residues 193-213 (LSPFVALVALISSAGAILASS). The Periplasmic segment spans residues 214–271 (ADYRVKRMTSFLNPWEHARDSGYQLTQALISFGRGEVSGVGLGNGLQKLFYLPEAHTD). The helical transmembrane segment at 272 to 292 (FLFSVLGEELGLVGVTLVIAL) threads the bilayer. Topologically, residues 293–315 (FTTLVVRGFSIGEQAEAAGERFS) are cytoplasmic. A helical transmembrane segment spans residues 316-336 (ALVAYGLVIWFGFQAFVNMGV). At 337–348 (NMGILPTKGLTL) the chain is on the periplasmic side. The chain crosses the membrane as a helical span at residues 349 to 369 (PLMSYGGGSMIVMCGAMAVLF). The Cytoplasmic portion of the chain corresponds to 370 to 388 (RIHYEVTELHKSNIKGKSR).

This sequence belongs to the SEDS family. FtsW subfamily.

The protein localises to the cell inner membrane. The catalysed reaction is [GlcNAc-(1-&gt;4)-Mur2Ac(oyl-L-Ala-gamma-D-Glu-L-Lys-D-Ala-D-Ala)](n)-di-trans,octa-cis-undecaprenyl diphosphate + beta-D-GlcNAc-(1-&gt;4)-Mur2Ac(oyl-L-Ala-gamma-D-Glu-L-Lys-D-Ala-D-Ala)-di-trans,octa-cis-undecaprenyl diphosphate = [GlcNAc-(1-&gt;4)-Mur2Ac(oyl-L-Ala-gamma-D-Glu-L-Lys-D-Ala-D-Ala)](n+1)-di-trans,octa-cis-undecaprenyl diphosphate + di-trans,octa-cis-undecaprenyl diphosphate + H(+). The protein operates within cell wall biogenesis; peptidoglycan biosynthesis. Its function is as follows. Peptidoglycan polymerase that is essential for cell division. This Methylomonas methanica (strain DSM 25384 / MC09) protein is Probable peptidoglycan glycosyltransferase FtsW.